Consider the following 698-residue polypeptide: SHC SH2 domain-binding protein 1 homolog B (698 aa).

PbH1 repeat units lie at residues 480 to 502 (CAELLMKYSDLYGAKGAGMEIYP), 503 to 524 (GSKCTLIGNGIHHCRDGILIKD), and 532 to 554 (IPKIIMENNVIHNNEGYAVVLVK).

The protein localises to the midbody. The protein resides in the cytoplasm. Its subcellular location is the cytoskeleton. It is found in the spindle. In terms of biological role, may play a role in signaling pathways governing cellular proliferation. The polypeptide is SHC SH2 domain-binding protein 1 homolog B (shcbp1-b) (Xenopus laevis (African clawed frog)).